Reading from the N-terminus, the 160-residue chain is MESGSGLLVRRIREGTVIDHIPAGRALTVLKILGITGREGARIAVVMNVESRKLGRKDIVKIEGRHLSPEEVDKIALVAPRATINIIHDYRVVAKRRVTVPDIVEGILMCPNPSCITRVGREPVKPRFRVVSRQPLVLQCVYCGTLVSEEDVAEQLAEGG.

Residues cysteine 110, cysteine 115, cysteine 140, and cysteine 143 each coordinate Zn(2+).

It belongs to the PyrI family. Contains catalytic and regulatory chains. Zn(2+) is required as a cofactor.

In terms of biological role, involved in allosteric regulation of aspartate carbamoyltransferase. The sequence is that of Aspartate carbamoyltransferase regulatory chain from Hyperthermus butylicus (strain DSM 5456 / JCM 9403 / PLM1-5).